A 70-amino-acid polypeptide reads, in one-letter code: Large ribosomal subunit protein bL31 (70 aa).

4 residues coordinate Zn(2+): cysteine 16, cysteine 18, cysteine 37, and cysteine 40.

The protein belongs to the bacterial ribosomal protein bL31 family. Type A subfamily. As to quaternary structure, part of the 50S ribosomal subunit. It depends on Zn(2+) as a cofactor.

In terms of biological role, binds the 23S rRNA. This Klebsiella pneumoniae (strain 342) protein is Large ribosomal subunit protein bL31.